Consider the following 235-residue polypeptide: Peroxynitrite isomerase 2 (235 aa).

Positions 82-88 match the GXWXGXG motif; it reads GVWRGEG. Positions 198 and 225 each coordinate heme b.

The protein belongs to the nitrobindin family. In terms of assembly, homodimer. Heme b is required as a cofactor.

The catalysed reaction is peroxynitrite = nitrate. It functions in the pathway nitrogen metabolism. Its function is as follows. Heme-binding protein able to scavenge peroxynitrite and to protect free L-tyrosine against peroxynitrite-mediated nitration, by acting as a peroxynitrite isomerase that converts peroxynitrite to nitrate. Therefore, this protein likely plays a role in peroxynitrite sensing and in the detoxification of reactive nitrogen and oxygen species (RNS and ROS, respectively). Is able to bind nitric oxide (NO) in vitro, but may act as a sensor of peroxynitrite levels in vivo. The chain is Peroxynitrite isomerase 2 from Mycolicibacterium paratuberculosis (strain ATCC BAA-968 / K-10) (Mycobacterium paratuberculosis).